The following is a 479-amino-acid chain: Cardiolipin synthase A (479 aa).

Transmembrane regions (helical) follow at residues 8-28 (FFGY…LHAL) and 38-58 (IAWA…YLIF). 2 PLD phosphodiesterase domains span residues 218–245 (VNFR…GDEY) and 392–419 (QPGF…DNRS). Residues H223, K225, D230, H397, K399, and D404 contribute to the active site.

This sequence belongs to the phospholipase D family. Cardiolipin synthase subfamily. ClsA sub-subfamily.

It localises to the cell inner membrane. The catalysed reaction is 2 a 1,2-diacyl-sn-glycero-3-phospho-(1'-sn-glycerol) = a cardiolipin + glycerol. Functionally, catalyzes the reversible phosphatidyl group transfer from one phosphatidylglycerol molecule to another to form cardiolipin (CL) (diphosphatidylglycerol) and glycerol. The polypeptide is Cardiolipin synthase A (Pseudomonas putida (strain ATCC 700007 / DSM 6899 / JCM 31910 / BCRC 17059 / LMG 24140 / F1)).